The sequence spans 483 residues: Altronate oxidoreductase (483 aa).

NAD(+) is bound at residue 18–29 (IIQFGEGNFLRA).

This sequence belongs to the mannitol dehydrogenase family. UxaB subfamily.

It carries out the reaction D-altronate + NAD(+) = keto-D-tagaturonate + NADH + H(+). It participates in carbohydrate metabolism; pentose and glucuronate interconversion. The sequence is that of Altronate oxidoreductase from Cronobacter sakazakii (strain ATCC BAA-894) (Enterobacter sakazakii).